Here is a 1031-residue protein sequence, read N- to C-terminus: Toll-like receptor 9 (1031 aa).

The first 25 residues, 1-25, serve as a signal peptide directing secretion; the sequence is MGPCHGALHPLSLLVQAAALAVALA. At 26 to 817 the chain is on the extracellular side; the sequence is QGTLPAFLPC…LCLDEALSWD (792 aa). Cys-35 and Cys-45 form a disulfide bridge. 47–51 provides a ligand contact to DNA; the sequence is WLFLK. LRR repeat units follow at residues 62–85, 87–110, 122–147, 150–166, 167–190, 198–221, 223–242, 243–268, 283–306, 308–332, 333–356, 363–386, 390–413, 415–440, 470–494, 496–519, 520–543, 545–572, 574–598, 600–622, 627–650, 652–675, 676–699, 701–723, 724–747, and 749–772; these read RGNV…DFVH, SSLR…HFPC, VPTL…SLVS, LSRT…LAGL, HSLR…ALQV, LGNL…LPPS, EYLL…DLAN, LTAL…CMEC, LNHL…WFHA, GNLM…AFQG, LAQL…HLHL, LLSL…TLRS, LPML…IFGA, PGLR…TGEV, CKTL…MFAR, SRLQ…QFMP, LTSL…SFTE, PRLE…SFVA, LPAL…LCSA, LRAL…LYLH, LRSL…TLDN, PKSL…SLVL, LPRL…SLPN, TQLQ…FFAL, ATRL…WFGS, and AGTL…AFVD. An N-linked (GlcNAc...) asparagine glycan is attached at Asn-64. DNA is bound by residues 72 to 77 and 95 to 109; these read SNRIHH and KWNC…MHFP. Cys-98 and Cys-110 are joined by a disulfide. A glycan (N-linked (GlcNAc...) asparagine) is linked at Asn-129. DNA-binding positions include Tyr-132, Arg-152, and 179-181; that span reads YYK. The cysteines at positions 178 and 184 are disulfide-linked. N-linked (GlcNAc...) asparagine glycosylation occurs at Asn-200. Tyr-208 contacts DNA. 2 N-linked (GlcNAc...) asparagine glycosylation sites follow: Asn-210 and Asn-242. Cystine bridges form between Cys-255–Cys-268 and Cys-258–Cys-265. A lipid anchor (S-palmitoyl cysteine) is attached at Cys-258. Arg-262 contributes to the DNA binding site. A lipid anchor (S-palmitoyl cysteine) is attached at Cys-265. N-linked (GlcNAc...) asparagine glycosylation is present at Asn-340. Cys-470 and Cys-500 form a disulfide bridge. Residues Asn-474 and Asn-513 are each glycosylated (N-linked (GlcNAc...) asparagine). The N-linked (GlcNAc...) asparagine glycan is linked to Asn-567. 3 N-linked (GlcNAc...) asparagine glycosylation sites follow: Asn-669, Asn-694, and Asn-699. The N-linked (GlcNAc...) asparagine glycan is linked to Asn-731. 2 disulfides stabilise this stretch: Cys-764/Cys-790 and Cys-766/Cys-809. Residues 818–838 form a helical membrane-spanning segment; sequence CFGLSLLTVALGLAVPMLHHL. Residues 839-1031 lie on the Cytoplasmic side of the membrane; that stretch reads CGWDLWYCFH…NFCRGPTTAE (193 aa). Positions 866 to 1011 constitute a TIR domain; sequence LPYDAFVVFD…SFWAQLGTAL (146 aa).

Belongs to the Toll-like receptor family. Monomer and homodimer. Exists as a monomer in the absence of unmethylated cytidine-phosphate-guanosine (CpG) ligand. Proteolytic processing of an insertion loop (Z-loop) is required for homodimerization upon binding to the unmethylated CpG ligand leading to its activation. Interacts with MYD88 via their respective TIR domains. Interacts with BTK. Interacts (via transmembrane domain) with UNC93B1. Interacts with CD300LH; the interaction may promote full activation of TLR9-triggered innate responses. Interacts with CNPY3 and HSP90B1; this interaction is required for proper folding in the endoplasmic reticulum. Interacts with SMPDL3B. Interacts with CD82; this interaction is essential for TLR9-dependent myddosome formation in response to CpG stimulation. Post-translationally, activated by proteolytic cleavage of the flexible loop between repeats LRR14 and LRR15 within the ectodomain. Cleavage requires UNC93B1. Proteolytically processed by first removing the majority of the ectodomain by either asparagine endopeptidase (AEP) or a cathepsin followed by a trimming event that is solely cathepsin mediated and required for optimal receptor signaling. Palmitoylated by ZDHHC3 in the Golgi regulates TLR9 trafficking from the Golgi to endosomes. Depalmitoylation by PPT1 controls the release of TLR9 from UNC93B1 in endosomes.

It localises to the endoplasmic reticulum membrane. Its subcellular location is the endosome. The protein localises to the lysosome. The protein resides in the cytoplasmic vesicle. It is found in the phagosome. Functionally, key component of innate and adaptive immunity. TLRs (Toll-like receptors) control host immune response against pathogens through recognition of molecular patterns specific to microorganisms. TLR9 is a nucleotide-sensing TLR which is activated by unmethylated cytidine-phosphate-guanosine (CpG) dinucleotides. Acts via MYD88 and TRAF6, leading to NF-kappa-B activation, cytokine secretion and the inflammatory response. Upon CpG stimulation, induces B-cell proliferation, activation, survival and antibody production. This is Toll-like receptor 9 (TLR9) from Felis catus (Cat).